The chain runs to 340 residues: Phenylalanine--tRNA ligase alpha subunit (340 aa).

Glu-258 contributes to the Mg(2+) binding site.

It belongs to the class-II aminoacyl-tRNA synthetase family. Phe-tRNA synthetase alpha subunit type 1 subfamily. Tetramer of two alpha and two beta subunits. Mg(2+) is required as a cofactor.

The protein resides in the cytoplasm. It catalyses the reaction tRNA(Phe) + L-phenylalanine + ATP = L-phenylalanyl-tRNA(Phe) + AMP + diphosphate + H(+). This is Phenylalanine--tRNA ligase alpha subunit from Corynebacterium glutamicum (strain ATCC 13032 / DSM 20300 / JCM 1318 / BCRC 11384 / CCUG 27702 / LMG 3730 / NBRC 12168 / NCIMB 10025 / NRRL B-2784 / 534).